We begin with the raw amino-acid sequence, 585 residues long: Cyclic nucleotide-binding domain-containing protein 2 (585 aa).

116-239 is a binding site for a nucleoside 3',5'-cyclic phosphate; that stretch reads SYRNYAEPLQ…DAQYRFEFFR (124 aa).

It localises to the cytoplasm. Its subcellular location is the cytosol. In terms of biological role, essential for male fertility. Plays an important role in spermatogenesis and regulates sperm motility by controlling the development of the flagellar bending of sperm. This is Cyclic nucleotide-binding domain-containing protein 2 (CNBD2) from Macaca fascicularis (Crab-eating macaque).